The following is a 349-amino-acid chain: Holliday junction branch migration complex subunit RuvB (349 aa).

The segment at 1–183 is large ATPase domain (RuvB-L); sequence MTDPSRLVTP…FGIPIRLNFY (183 aa). Residues leucine 22, arginine 23, glycine 64, lysine 67, threonine 68, threonine 69, 130–132, arginine 173, tyrosine 183, and arginine 220 each bind ATP; that span reads EDF. Position 68 (threonine 68) interacts with Mg(2+). Residues 184–254 are small ATPAse domain (RuvB-S); sequence TIEELESIVT…IADHALGALE (71 aa). The head domain (RuvB-H) stretch occupies residues 257-349; that stretch reads SAGLDAMDRR…GLFGDTGDQE (93 aa). Arginine 293, arginine 312, and arginine 317 together coordinate DNA.

The protein belongs to the RuvB family. In terms of assembly, homohexamer. Forms an RuvA(8)-RuvB(12)-Holliday junction (HJ) complex. HJ DNA is sandwiched between 2 RuvA tetramers; dsDNA enters through RuvA and exits via RuvB. An RuvB hexamer assembles on each DNA strand where it exits the tetramer. Each RuvB hexamer is contacted by two RuvA subunits (via domain III) on 2 adjacent RuvB subunits; this complex drives branch migration. In the full resolvosome a probable DNA-RuvA(4)-RuvB(12)-RuvC(2) complex forms which resolves the HJ.

Its subcellular location is the cytoplasm. The enzyme catalyses ATP + H2O = ADP + phosphate + H(+). The RuvA-RuvB-RuvC complex processes Holliday junction (HJ) DNA during genetic recombination and DNA repair, while the RuvA-RuvB complex plays an important role in the rescue of blocked DNA replication forks via replication fork reversal (RFR). RuvA specifically binds to HJ cruciform DNA, conferring on it an open structure. The RuvB hexamer acts as an ATP-dependent pump, pulling dsDNA into and through the RuvAB complex. RuvB forms 2 homohexamers on either side of HJ DNA bound by 1 or 2 RuvA tetramers; 4 subunits per hexamer contact DNA at a time. Coordinated motions by a converter formed by DNA-disengaged RuvB subunits stimulates ATP hydrolysis and nucleotide exchange. Immobilization of the converter enables RuvB to convert the ATP-contained energy into a lever motion, pulling 2 nucleotides of DNA out of the RuvA tetramer per ATP hydrolyzed, thus driving DNA branch migration. The RuvB motors rotate together with the DNA substrate, which together with the progressing nucleotide cycle form the mechanistic basis for DNA recombination by continuous HJ branch migration. Branch migration allows RuvC to scan DNA until it finds its consensus sequence, where it cleaves and resolves cruciform DNA. The protein is Holliday junction branch migration complex subunit RuvB of Rhodopseudomonas palustris (strain ATCC BAA-98 / CGA009).